The following is a 349-amino-acid chain: MKYSRVFINSLAYELAPVVVSSSELESRLAPLYQKFRIPMGQLAALTGITERRWWPKGHQLSDGAINAAHKAIAETGIDVAELGAVVYTGVCRDQHEPATACRIAAALGVSKDTAIYDISNACLGVLSGILDIANRIELGQIKAGMVVSCESARDIVDVTIDNMLADPTMQNFAQSLATLTGGSGAVAVILTDGSLPLTNVRKHQLLGASHLSAPQHHQLCQWGLQEVGHNIYREFMRTDAVTLLKEGVELAKHTWEHFLAQRNWLVEQVDKVICHQVGASNRKQVLSALNIPPEKEFPTYQLLGNMGTVSLPVTAAMAHDQGFLRPGDQVSFLGIGSGLNCMMLGIKW.

Glu97 acts as the Proton acceptor in catalysis. Cys123 functions as the Acyl-thioester intermediate in the catalytic mechanism.

Belongs to the thiolase-like superfamily. OleA family.

It catalyses the reaction a 1,2-saturated acyl-CoA + an acyl-CoA + H2O = an (R)-2-alkyl-3-oxoalkanoate + 2 CoA + H(+). Involved in olefin biosynthesis. Catalyzes a non-decarboxylative head-to-head Claisen condensation of two acyl-CoA molecules, generating an (R)-2-alkyl-3-oxoalkanoate. The S.oneidensis oleABCD genes produce 3,6,9,12,15,19,22,25,28-hentriacontanonaene, which may aid the cells in adapting to a sudden drop in temperature. The polypeptide is Acyl-CoA:acyl-CoA alkyltransferase (Shewanella oneidensis (strain ATCC 700550 / JCM 31522 / CIP 106686 / LMG 19005 / NCIMB 14063 / MR-1)).